A 356-amino-acid chain; its full sequence is Phospho-N-acetylmuramoyl-pentapeptide-transferase (356 aa).

9 helical membrane passes run 27–47, 74–94, 97–117, 128–148, 164–184, 201–221, 241–261, 284–304, and 333–353; these read AAAITALLIGLIFGPRFIGWM, MGGLMILIAVSISLFLWMDFA, YVWACIAVMLGFGVIGFIDDY, VSGKVRLLWEFGIAFFACYLI, PVIDLGWFYYPFAAFVIVGTA, VIIASLAFFVISYVVGNAVFA, AIIGAGFAFLWFNAPPAAIFM, IVLGIVGGLFVAEALSVIIQV, and TVVIRFWIISFALALLGLATL.

It belongs to the glycosyltransferase 4 family. MraY subfamily. Requires Mg(2+) as cofactor.

It localises to the cell inner membrane. It carries out the reaction UDP-N-acetyl-alpha-D-muramoyl-L-alanyl-gamma-D-glutamyl-meso-2,6-diaminopimeloyl-D-alanyl-D-alanine + di-trans,octa-cis-undecaprenyl phosphate = di-trans,octa-cis-undecaprenyl diphospho-N-acetyl-alpha-D-muramoyl-L-alanyl-D-glutamyl-meso-2,6-diaminopimeloyl-D-alanyl-D-alanine + UMP. The protein operates within cell wall biogenesis; peptidoglycan biosynthesis. Functionally, catalyzes the initial step of the lipid cycle reactions in the biosynthesis of the cell wall peptidoglycan: transfers peptidoglycan precursor phospho-MurNAc-pentapeptide from UDP-MurNAc-pentapeptide onto the lipid carrier undecaprenyl phosphate, yielding undecaprenyl-pyrophosphoryl-MurNAc-pentapeptide, known as lipid I. This chain is Phospho-N-acetylmuramoyl-pentapeptide-transferase, found in Zymomonas mobilis subsp. mobilis (strain ATCC 31821 / ZM4 / CP4).